The following is a 236-amino-acid chain: Kinetochore protein Spc25 (236 aa).

Residues 44–106 (KNIISAKEAI…DMEAQLLRHT (63 aa)) adopt a coiled-coil conformation. A disordered region spans residues 194–217 (EVAGASPVTPSGSERPKATSKHSN).

The protein belongs to the SPC25 family. Component of the Ndc80 complex, which is composed of Ndc80, Nuf2 and Spc25.

It is found in the nucleus. The protein localises to the chromosome. The protein resides in the centromere. Its subcellular location is the kinetochore. In terms of biological role, acts as a component of the essential kinetochore-associated Ndc80 complex, which is required for chromosome segregation and spindle checkpoint activity during meiosis and mitosis. Required for kinetochore integrity and the organization of stable microtubule binding sites in the outer plate of the kinetochore. Participates in SAC signaling that responds specifically to disruptions in spindle microtubule dynamics. The NDC80 complex synergistically enhances the affinity of the SKA1 complex for microtubules and may allow the NDC80 complex to track depolymerizing microtubules. This is Kinetochore protein Spc25 from Drosophila persimilis (Fruit fly).